Reading from the N-terminus, the 160-residue chain is uncharacterized protein (160 aa).

The protein resides in the cytoplasm. The protein localises to the nucleus. This is an uncharacterized protein from Schizosaccharomyces pombe (strain 972 / ATCC 24843) (Fission yeast).